Consider the following 577-residue polypeptide: Optineurin (577 aa).

Disordered stretches follow at residues 1–32 (MSHQ…HPNL) and 101–143 (SHEN…KDQL). Positions 38 to 170 (EELLQQMKEL…VSELQLKLNS (133 aa)) form a coiled coil. The segment at 58–209 (MKLNNQAMKG…GPTRTVSTGT (152 aa)) is interaction with Rab8. An LIR motif is present at residues 176–181 (DSFVEI). The residue at position 177 (Ser177) is a Phosphoserine; by TBK1. Basic and acidic residues predominate over residues 186–197 (GEAEGSVKEIKH). Disordered regions lie at residues 186 to 209 (GEAE…STGT) and 261 to 297 (VSDF…TVGS). The residue at position 198 (Ser198) is a Phosphoserine. A coiled-coil region spans residues 239-508 (CLREGNQKVE…LLKENDAFED (270 aa)). 2 stretches are compositionally biased toward basic and acidic residues: residues 261 to 274 (VSDF…RSEI) and 281 to 292 (STEKENDEEKGP). Ser342 carries the post-translational modification Phosphoserine. Residues 411–577 (TRKESEKVDR…LQIHVMDCII (167 aa)) are interaction with HD. The interaction with MYO6 stretch occupies residues 412 to 520 (RKESEKVDRA…RQSLMEMQSR (109 aa)). Positions 474 to 479 (DFHAER) match the UBAN motif. Ser526 is subject to Phosphoserine. The CCHC NOA-type zinc-finger motif lies at 547-577 (QRNIPIHSCPKCGEVLPDIDTLQIHVMDCII). Cys555, Cys558, His571, and Cys575 together coordinate Zn(2+).

In terms of assembly, self-associates. Interacts with HD. Interacts with GTF3A. Interacts with MYO6. Interacts (via UBAN) with ubiquitinated TFRC. Interacts with GTP-bound Rab8 (RAB8A and/or RAB8B). Interacts with TBC1D17. Interacts with TBK1. Interacts with TRAF3. Binds to linear ubiquitin chains. Interacts with LC3 family members MAP1LC3A, MAP1LC3B, GABARAP, GABARAPL1 and GABARAPL2; OPTN phosphorylation increases the association (at least with MAP1LC3B). Interacts with RAB12; the interaction may be indirect. Interacts with TBK1; this interaction leads to the Golgi localization of TBK1 and its subsequent activation. Interacts with palmitoyltransferase ZDHHC17/HIP14; the interaction does not lead to palmitoylation of OPTN. Interacts with CYLD. Interacts with TOM1; the interaction is indirect and is mediated by MYO6, which acts as a bridge between TOM1 and OPTN. Interacts with USP12; the interaction is independent of USP12 deubiquitinase activity and may be involved in regulation of autophagic flux. (Microbial infection) Interacts with E3 14.7 kDa protein of group C human adenovirus. Interacts with Bluetongue virus protein NS3. In terms of processing, phosphorylated by TBK1, leading to restrict bacterial proliferation in case of infection. Phosphorylation is induced by phorbol esters and decreases its half-time. Present in aqueous humor of the eye (at protein level). Expressed in the trabecular meshwork (at protein level). Expressed in nonpigmented ciliary epithelium (at protein level). Expressed at high levels in skeletal muscle, also detected in heart, brain, pancreas, kidney, placenta and liver. Expressed in dermal fibroblasts (at protein level).

It localises to the cytoplasm. The protein localises to the perinuclear region. The protein resides in the golgi apparatus. Its subcellular location is the trans-Golgi network. It is found in the cytoplasmic vesicle. It localises to the autophagosome. The protein localises to the recycling endosome. Functionally, plays an important role in the maintenance of the Golgi complex, in membrane trafficking, in exocytosis, through its interaction with myosin VI and Rab8. Links myosin VI to the Golgi complex and plays an important role in Golgi ribbon formation. Plays a role in the activation of innate immune response during viral infection. Mechanistically, recruits TBK1 at the Golgi apparatus, promoting its trans-phosphorylation after RLR or TLR3 stimulation. In turn, activated TBK1 phosphorylates its downstream partner IRF3 to produce IFN-beta/IFNB1. Plays a neuroprotective role in the eye and optic nerve. May act by regulating membrane trafficking and cellular morphogenesis via a complex that contains Rab8 and huntingtin (HD). Mediates the interaction of Rab8 with the probable GTPase-activating protein TBC1D17 during Rab8-mediated endocytic trafficking, such as that of transferrin receptor (TFRC/TfR); regulates Rab8 recruitment to tubules emanating from the endocytic recycling compartment. Autophagy receptor that interacts directly with both the cargo to become degraded and an autophagy modifier of the MAP1 LC3 family; targets ubiquitin-coated bacteria (xenophagy), such as cytoplasmic Salmonella enterica, and appears to function in the same pathway as SQSTM1 and CALCOCO2/NDP52. In terms of biological role, (Microbial infection) May constitute a cellular target for various viruses, such as adenovirus E3 14.7 or Bluetongue virus, to inhibit innate immune response. During RNA virus infection, such as that of Sendai virus, negatively regulates the induction of IFNB1. This Homo sapiens (Human) protein is Optineurin (OPTN).